The primary structure comprises 97 residues: Co-chaperonin GroES (97 aa).

The protein belongs to the GroES chaperonin family. Heptamer of 7 subunits arranged in a ring. Interacts with the chaperonin GroEL.

It localises to the cytoplasm. Functionally, together with the chaperonin GroEL, plays an essential role in assisting protein folding. The GroEL-GroES system forms a nano-cage that allows encapsulation of the non-native substrate proteins and provides a physical environment optimized to promote and accelerate protein folding. GroES binds to the apical surface of the GroEL ring, thereby capping the opening of the GroEL channel. In Escherichia fergusonii (strain ATCC 35469 / DSM 13698 / CCUG 18766 / IAM 14443 / JCM 21226 / LMG 7866 / NBRC 102419 / NCTC 12128 / CDC 0568-73), this protein is Co-chaperonin GroES.